Reading from the N-terminus, the 990-residue chain is Kinesin-related protein 5 (990 aa).

In terms of domain architecture, Kinesin motor spans 6–330; that stretch reads NIRVMCRFRP…LKFGARAKSI (325 aa). 83-90 contacts ATP; the sequence is GQTGSGKT. Disordered stretches follow at residues 401–485 and 732–788; these read QSNS…SSID and FSSS…QDQQ. The span at 406-418 shows a compositional bias: gly residues; it reads SGGGGSGSSGGSS. Low complexity-rich tracts occupy residues 466 to 485 and 733 to 781; these read TSSI…SSID and SSSN…PSSN. A coiled-coil region spans residues 513 to 948; it reads IEMEKMKEDT…DQLISTQRLI (436 aa).

The protein belongs to the TRAFAC class myosin-kinesin ATPase superfamily. Kinesin family. Kinesin subfamily. In terms of assembly, interacts with actin.

It localises to the cytoplasm. It is found in the cytoskeleton. Its function is as follows. Microtubule-associated force-producing protein that plays a role in organelle transport. Its motor activity is directed toward the microtubule's plus end. May connect microtubules to actin filaments. Associates with actin-based structures in cells and is likely involved in the organization of actin cytoskeletons in such structures. The chain is Kinesin-related protein 5 (kif5) from Dictyostelium discoideum (Social amoeba).